Here is a 234-residue protein sequence, read N- to C-terminus: Small ribosomal subunit protein eS1y (234 aa).

Residues 1 to 18 show a composition bias toward basic residues; it reads MAVGKNKRISKGKKGGKK. The segment at 1-20 is disordered; the sequence is MAVGKNKRISKGKKGGKKKA.

Belongs to the eukaryotic ribosomal protein eS1 family. Component of the small ribosomal subunit. Mature ribosomes consist of a small (40S) and a large (60S) subunit. The 40S subunit contains about 33 different proteins and 1 molecule of RNA (18S). The 60S subunit contains about 49 different proteins and 3 molecules of RNA (25S, 5.8S and 5S).

Its subcellular location is the cytoplasm. The sequence is that of Small ribosomal subunit protein eS1y from Vitis vinifera (Grape).